Here is a 125-residue protein sequence, read N- to C-terminus: uncharacterized protein (125 aa).

This is an uncharacterized protein from Mycobacterium bovis (strain ATCC BAA-935 / AF2122/97).